The chain runs to 208 residues: Sexual inducer glycoprotein (208 aa).

The signal sequence occupies residues 1 to 11; sequence MAVVVVNSATA. N-linked (GlcNAc...) asparagine glycans are attached at residues N89, N119, N131, N139, N146, and N188.

In terms of biological role, the sexual inducer is a glycoprotein synthesized and released by sexual males at about the time they release sperm packets. It is one of the most potent biological effector molecules known: it exhibits full effectiveness in converting asexually growing males and females to the sexual pathway at about 10(-7) m. This is Sexual inducer glycoprotein from Volvox carteri (Green alga).